A 196-amino-acid chain; its full sequence is tRNA(Phe) 7-((3-amino-3-carboxypropyl)-4-demethylwyosine(37)-N(4))-methyltransferase 1 (196 aa).

It belongs to the TYW3 family.

The enzyme catalyses 4-demethyl-7-[(3S)-3-amino-3-carboxypropyl]wyosine(37) in tRNA(Phe) + S-adenosyl-L-methionine = 7-[(3S)-3-amino-3-carboxypropyl]wyosine(37) in tRNA(Phe) + S-adenosyl-L-homocysteine + H(+). Its function is as follows. S-adenosyl-L-methionine-dependent methyltransferase that acts as a component of the wyosine derivatives biosynthesis pathway. Probably methylates N-4 position of wybutosine-86 to produce wybutosine-72. The sequence is that of tRNA(Phe) 7-((3-amino-3-carboxypropyl)-4-demethylwyosine(37)-N(4))-methyltransferase 1 from Pyrococcus furiosus (strain ATCC 43587 / DSM 3638 / JCM 8422 / Vc1).